A 161-amino-acid polypeptide reads, in one-letter code: RNA pyrophosphohydrolase (161 aa).

The 147-residue stretch at 9-155 (PYRPCVGVML…KRRVYRQVVD (147 aa)) folds into the Nudix hydrolase domain. The Nudix box motif lies at 44-65 (GGIDDGEELHPAALRELSEETG).

The protein belongs to the Nudix hydrolase family. RppH subfamily. It depends on a divalent metal cation as a cofactor.

Its function is as follows. Accelerates the degradation of transcripts by removing pyrophosphate from the 5'-end of triphosphorylated RNA, leading to a more labile monophosphorylated state that can stimulate subsequent ribonuclease cleavage. The protein is RNA pyrophosphohydrolase of Novosphingobium aromaticivorans (strain ATCC 700278 / DSM 12444 / CCUG 56034 / CIP 105152 / NBRC 16084 / F199).